The chain runs to 31 residues: Cytochrome b6-f complex subunit 6 (31 aa).

Residues 4–24 (VIAYLGLLASVLIGTIVIYLG) form a helical membrane-spanning segment.

This sequence belongs to the PetL family. The 4 large subunits of the cytochrome b6-f complex are cytochrome b6, subunit IV (17 kDa polypeptide, PetD), cytochrome f and the Rieske protein, while the 4 small subunits are PetG, PetL, PetM and PetN. The complex functions as a dimer.

The protein resides in the plastid. It localises to the chloroplast thylakoid membrane. Its function is as follows. Component of the cytochrome b6-f complex, which mediates electron transfer between photosystem II (PSII) and photosystem I (PSI), cyclic electron flow around PSI, and state transitions. PetL is important for photoautotrophic growth as well as for electron transfer efficiency and stability of the cytochrome b6-f complex. This is Cytochrome b6-f complex subunit 6 from Oltmannsiellopsis viridis (Marine flagellate).